Consider the following 371-residue polypeptide: Peptidyl-prolyl cis-trans isomerase D (371 aa).

The PPIase cyclophilin-type domain occupies 11–172 (FFDIQIGNEK…KDVTIVECGE (162 aa)). The tract at residues 175–195 (GQDYDDADKQTPDATGDPYED) is disordered. TPR repeat units lie at residues 214-247 (ASEL…LHEF), 267-300 (FALH…ANAA), and 308-341 (AKAY…APGD).

The protein belongs to the cyclophilin-type PPIase family. PPIase D subfamily.

The protein resides in the cytoplasm. It catalyses the reaction [protein]-peptidylproline (omega=180) = [protein]-peptidylproline (omega=0). Functionally, PPIases accelerate the folding of proteins. It catalyzes the cis-trans isomerization of proline imidic peptide bonds in oligopeptides. The polypeptide is Peptidyl-prolyl cis-trans isomerase D (cpr6) (Aspergillus oryzae (strain ATCC 42149 / RIB 40) (Yellow koji mold)).